Here is a 178-residue protein sequence, read N- to C-terminus: ATP-dependent protease subunit HslV (178 aa).

Residue Thr7 is part of the active site. 3 residues coordinate Na(+): Gly162, Cys165, and Thr168.

Belongs to the peptidase T1B family. HslV subfamily. In terms of assembly, a double ring-shaped homohexamer of HslV is capped on each side by a ring-shaped HslU homohexamer. The assembly of the HslU/HslV complex is dependent on binding of ATP.

The protein resides in the cytoplasm. The catalysed reaction is ATP-dependent cleavage of peptide bonds with broad specificity.. Its activity is regulated as follows. Allosterically activated by HslU binding. In terms of biological role, protease subunit of a proteasome-like degradation complex believed to be a general protein degrading machinery. This Azoarcus sp. (strain BH72) protein is ATP-dependent protease subunit HslV.